A 327-amino-acid polypeptide reads, in one-letter code: Protein UL95 homolog (327 aa).

It belongs to the herpesviridae UL95 family. As to quaternary structure, interacts with ORF24; this interaction may serve as a core scaffold for the assembly of the viral transcription initiation complex. Interacts with ORF66. Interacts with ORF18. Interacts with ORF23. Interacts with ORF31. Interacts with host EPAS1; this interaction stabilizes host EPAS1, ensuring its transcriptional activity.

The protein localises to the host nucleus. Its function is as follows. Participates in the expression of late viral mRNAs in part by interacting with ORF24. Expressed before viral DNA replication, assembles at the viral pre-replication complexes (pre-RCs) and thus serves as a hub for recruiting a viral transcription complex to ORF24 to promote late viral gene expression. Also plays a regulatory role in the viral life cycle by regulating host transcriptional regulators HIF1A and EPAS1. The sequence is that of Protein UL95 homolog (ORF34) from Homo sapiens (Human).